The chain runs to 430 residues: RNA pseudouridine synthase 2, chloroplastic (430 aa).

The transit peptide at 1–43 (MLSISQLPSFSLTTAKSLRYPSSPSSSLSIFFSFFPKVSNFVR) directs the protein to the chloroplast. The S4 RNA-binding domain maps to 82-155 (IRLDSWISSR…IPLDIVYEDK (74 aa)). Positions 195-222 (SNSEEDDDSDEETFSDDEEMTTSPSSYA) are disordered. Positions 196 to 214 (NSEEDDDSDEETFSDDEEM) are enriched in acidic residues. Asp-234 is an active-site residue.

This sequence belongs to the pseudouridine synthase RluA family.

It localises to the plastid. Its subcellular location is the chloroplast. It catalyses the reaction a uridine in RNA = a pseudouridine in RNA. This is RNA pseudouridine synthase 2, chloroplastic from Arabidopsis thaliana (Mouse-ear cress).